Consider the following 259-residue polypeptide: Phosphate import ATP-binding protein PstB (259 aa).

The ABC transporter domain maps to 11-254; that stretch reads AEARNLNFYY…PQDKRTEDYI (244 aa). An ATP-binding site is contributed by 43-50; the sequence is GPSGCGKS.

Belongs to the ABC transporter superfamily. Phosphate importer (TC 3.A.1.7) family. In terms of assembly, the complex is composed of two ATP-binding proteins (PstB), two transmembrane proteins (PstC and PstA) and a solute-binding protein (PstS).

It localises to the cell inner membrane. It carries out the reaction phosphate(out) + ATP + H2O = ADP + 2 phosphate(in) + H(+). In terms of biological role, part of the ABC transporter complex PstSACB involved in phosphate import. Responsible for energy coupling to the transport system. In Dechloromonas aromatica (strain RCB), this protein is Phosphate import ATP-binding protein PstB.